Reading from the N-terminus, the 514-residue chain is Major capsid protein (514 aa).

This sequence belongs to the T4 phage capsid protein family. As to quaternary structure, homohexamer. Interacts with the portal protein. Interacts with the capsid vertex protein that forms pentamers. A proteolytic cleavage by the prohead core protein protease gives rise to the mature major capsid protein during virus maturation.

It localises to the virion. Its function is as follows. Major capsid protein that self-associates to form hexamers, building most of the capsid in association with pentons made of the capsid vertex protein and one dodecamer of the portal protein. In Vibrio parahaemolyticus (KVP40), this protein is Major capsid protein.